A 313-amino-acid polypeptide reads, in one-letter code: Protein PALE CRESS, chloroplastic (313 aa).

The N-terminal 22 residues, 1 to 22 (MAATSLVLTCASPLFSSPRVIS), are a transit peptide targeting the chloroplast.

In terms of tissue distribution, expressed in green tissues, including leaves. Accumulates in chloroplasts of mature stomatal guard cells.

It localises to the plastid. It is found in the chloroplast. The protein resides in the chromoplast. The protein localises to the etioplast. Its subcellular location is the amyloplast. In terms of biological role, required for the differentiation of chloroplast from proplastids or etioplasts, probably by modulating some chloroplast-encoded genes expression and mRNA maturation. Involved in leaf-cells differentiation. This Arabidopsis thaliana (Mouse-ear cress) protein is Protein PALE CRESS, chloroplastic (PAC).